The sequence spans 590 residues: Beta-glucosidase 29 (590 aa).

Residues 1–21 (MNVQIFILLLIISWLTPKITS) form the signal peptide. Residues Gln-48, His-151, and 196–197 (NE) contribute to the a beta-D-glucoside site. The active-site Proton donor is Glu-197. Residues Cys-216 and Cys-224 are joined by a disulfide bond. N-linked (GlcNAc...) asparagine glycans are attached at residues Asn-255 and Asn-331. Tyr-341 is a binding site for a beta-D-glucoside. Asn-371 is a glycosylation site (N-linked (GlcNAc...) asparagine). A beta-D-glucoside is bound by residues Glu-413, Trp-463, 470–471 (EW), and Phe-479. The active-site Nucleophile is the Glu-413. N-linked (GlcNAc...) asparagine glycosylation is found at Asn-522 and Asn-553.

The protein belongs to the glycosyl hydrolase 1 family.

It catalyses the reaction Hydrolysis of terminal, non-reducing beta-D-glucosyl residues with release of beta-D-glucose.. The protein is Beta-glucosidase 29 of Arabidopsis thaliana (Mouse-ear cress).